The following is a 95-amino-acid chain: FXYD domain-containing ion transport regulator 6 (95 aa).

The N-terminal stretch at 1–18 (MEVVLLFLCGLLAPAVLA) is a signal peptide. Over 19–35 (SATEQEKEKDPFHYDYQ) the chain is Extracellular. The helical transmembrane segment at 36–58 (TLRIGGLVFAVVLFSVGILLILS) threads the bilayer. Residues 59-95 (RRCKCSFNQKPRAPGDEEAQVENLVTANATEPQKAEN) are Cytoplasmic-facing. The interval 69 to 95 (PRAPGDEEAQVENLVTANATEPQKAEN) is disordered.

This sequence belongs to the FXYD family. Regulatory subunit of the sodium/potassium-transporting ATPase which is composed of a catalytic alpha subunit, a non-catalytic beta subunit and an additional regulatory subunit. The regulatory subunit, a member of the FXYD protein family, modulates the enzymatic activity in a tissue- and isoform-specific way by changing affinities of the Na+/K+-ATPase toward Na(+), K(+) or ATP.

It is found in the cell membrane. Functionally, associates with and regulates the activity of the sodium/potassium-transporting ATPase (NKA) which catalyzes the hydrolysis of ATP coupled with the exchange of Na(+) and K(+) ions across the plasma membrane. Reduces the apparent affinity for intracellular Na(+) with no change in the apparent affinity for extracellular K(+). In addition to modulating NKA kinetics, may also function as a regulator of NKA localization to the plasma membrane. This chain is FXYD domain-containing ion transport regulator 6 (FXYD6), found in Bos taurus (Bovine).